A 291-amino-acid polypeptide reads, in one-letter code: Shikimate dehydrogenase (NADP(+)) (291 aa).

Shikimate-binding positions include 22–24 and Thr-69; that span reads SLS. The Proton acceptor role is filled by Lys-73. The shikimate site is built by Asn-94 and Asp-110. NADP(+) contacts are provided by residues 131–135 and Leu-226; that span reads GSGGA. Position 228 (Tyr-228) interacts with shikimate. Position 249 (Gly-249) interacts with NADP(+).

Belongs to the shikimate dehydrogenase family. Homodimer.

The enzyme catalyses shikimate + NADP(+) = 3-dehydroshikimate + NADPH + H(+). It functions in the pathway metabolic intermediate biosynthesis; chorismate biosynthesis; chorismate from D-erythrose 4-phosphate and phosphoenolpyruvate: step 4/7. Functionally, involved in the biosynthesis of the chorismate, which leads to the biosynthesis of aromatic amino acids. Catalyzes the reversible NADPH linked reduction of 3-dehydroshikimate (DHSA) to yield shikimate (SA). The sequence is that of Shikimate dehydrogenase (NADP(+)) from Synechococcus sp. (strain JA-3-3Ab) (Cyanobacteria bacterium Yellowstone A-Prime).